Reading from the N-terminus, the 256-residue chain is DNA repair protein RecO (256 aa).

The protein belongs to the RecO family.

Its function is as follows. Involved in DNA repair and RecF pathway recombination. This chain is DNA repair protein RecO, found in Bacillus pumilus (strain SAFR-032).